The primary structure comprises 435 residues: MTSPLKRTLTRELPQHEGQTVKLQGFVHARRDLGGVQFLVLRDVTGVTQCVGSGLTLPLAESSVEVVGKVKAHPKAPGGFEVQVEDFRVISAATEATPVEIPKMEWNVNPETMLDYRVVTVRGLKERAALKVQAELVDAFRAHLRGEGFTEISTPKIVSAGAEGGANLFPIDYFGHPAYLAQSPQLYKQIMVGVFERVFEVAAVYRAEEHATSRHLNEYLSLDVEMGFIEDEEDVMGLENRLLASIMERLRATSQAEFELLGATIPDVPAHIPRITLMDARQLVTEKYGHPVGGKDLDPEAERLLSQHFAETEGSDFVFVTKYPRAARPFYAHPELNEDGSVNGEVTRGFDLLFRGIEITSGGQRIHDYGMLMDSIAAYKLKPESLEGYTEVFKYGMPPHGGFAIGAERLTAKLLGIANVRYARAFPRDRHRLTP.

Glutamate 163 contributes to the L-aspartate binding site. The aspartate stretch occupies residues 185–188; that stretch reads QLYK. Arginine 206 contacts L-aspartate. ATP-binding positions include 206–208, 214–216, and glutamate 358; these read RAE and RHL. L-aspartate contacts are provided by serine 361 and arginine 365. 406-409 is a binding site for ATP; that stretch reads GAER.

Belongs to the class-II aminoacyl-tRNA synthetase family. Type 2 subfamily. Homodimer.

It localises to the cytoplasm. The catalysed reaction is tRNA(Asx) + L-aspartate + ATP = L-aspartyl-tRNA(Asx) + AMP + diphosphate. In terms of biological role, aspartyl-tRNA synthetase with relaxed tRNA specificity since it is able to aspartylate not only its cognate tRNA(Asp) but also tRNA(Asn). Reaction proceeds in two steps: L-aspartate is first activated by ATP to form Asp-AMP and then transferred to the acceptor end of tRNA(Asp/Asn). Is slightly more efficient at aminoacylating tRNA(Asn) over tRNA(Asp). The sequence is that of Aspartate--tRNA(Asp/Asn) ligase (aspS2) from Deinococcus radiodurans (strain ATCC 13939 / DSM 20539 / JCM 16871 / CCUG 27074 / LMG 4051 / NBRC 15346 / NCIMB 9279 / VKM B-1422 / R1).